The chain runs to 241 residues: Neuromodulin (241 aa).

Residues 1–26 (TKQVEKNEDGDQKIEQDGIKPEDKAH) show a composition bias toward basic and acidic residues. The tract at residues 1–241 (TKQVEKNEDG…EESKADQENA (241 aa)) is disordered. An IQ domain is found at 25–54 (AHKAATKIQASFRGHITRKKLKGEKKGDAP). Composition is skewed to low complexity over residues 80-95 (APAA…AQQE) and 118-131 (SEQP…PAAS). 2 stretches are compositionally biased toward basic and acidic residues: residues 132–147 (SEEK…REST) and 159–171 (KADE…EPKQ). A compositionally biased stretch (low complexity) spans 172 to 198 (ADVPAADTTATTTPAAEDATAKATAQP). Basic and acidic residues-rich tracts occupy residues 208-220 (TEEK…ETKP) and 232-241 (EESKADQENA).

The protein belongs to the neuromodulin family. Binds calmodulin with a greater affinity in the absence of Ca(2+) than in its presence. In terms of processing, palmitoylated. Palmitoylation is essential for plasma membrane association.

The protein localises to the cell membrane. Its subcellular location is the cell projection. The protein resides in the growth cone membrane. It localises to the synapse. It is found in the filopodium membrane. Its function is as follows. This protein is associated with nerve growth. It is a major component of the motile 'growth cones' that form the tips of elongating axons. Plays a role in axonal and dendritic filopodia induction. This is Neuromodulin (GAP43) from Serinus canaria (Island canary).